A 173-amino-acid polypeptide reads, in one-letter code: Thiol-disulfide oxidoreductase ResA (173 aa).

The chain crosses the membrane as a helical; Signal-anchor for type II membrane protein span at residues 10–29 (VIILLILSGAVGFTLYQGYF). The 139-residue stretch at 35-173 (MEIGKEAPNF…LEEYLKKITP (139 aa)) folds into the Thioredoxin domain. C73 and C76 are disulfide-bonded.

It belongs to the thioredoxin family. ResA subfamily.

The protein localises to the cell membrane. The protein operates within protein modification; cytochrome c assembly. Its function is as follows. Thiol-disulfide oxidoreductase which is required in disulfide reduction during c-type cytochrome synthesis. May accept reducing equivalents from CcdA, leading to breakage of disulfide bonds in apocytochrome c; following this reduction heme can be covalently attached. In Bacillus cereus (strain ATCC 10987 / NRS 248), this protein is Thiol-disulfide oxidoreductase ResA.